Consider the following 125-residue polypeptide: Large ribosomal subunit protein bL12 (125 aa).

This sequence belongs to the bacterial ribosomal protein bL12 family. Homodimer. Part of the ribosomal stalk of the 50S ribosomal subunit. Forms a multimeric L10(L12)X complex, where L10 forms an elongated spine to which 2 to 4 L12 dimers bind in a sequential fashion. Binds GTP-bound translation factors.

Forms part of the ribosomal stalk which helps the ribosome interact with GTP-bound translation factors. Is thus essential for accurate translation. The chain is Large ribosomal subunit protein bL12 from Helicobacter acinonychis (strain Sheeba).